A 284-amino-acid polypeptide reads, in one-letter code: Pantothenate synthetase (284 aa).

31-38 provides a ligand contact to ATP; sequence MGNLHAGH. Residue His-38 is the Proton donor of the active site. Gln-62 contacts (R)-pantoate. Residue Gln-62 coordinates beta-alanine. 150–153 serves as a coordination point for ATP; that stretch reads GKKD. Position 156 (Gln-156) interacts with (R)-pantoate. ATP contacts are provided by residues Val-179 and 187-190; that span reads MSSR.

The protein belongs to the pantothenate synthetase family. In terms of assembly, homodimer.

The protein localises to the cytoplasm. The catalysed reaction is (R)-pantoate + beta-alanine + ATP = (R)-pantothenate + AMP + diphosphate + H(+). It functions in the pathway cofactor biosynthesis; (R)-pantothenate biosynthesis; (R)-pantothenate from (R)-pantoate and beta-alanine: step 1/1. Functionally, catalyzes the condensation of pantoate with beta-alanine in an ATP-dependent reaction via a pantoyl-adenylate intermediate. This chain is Pantothenate synthetase, found in Xanthomonas campestris pv. campestris (strain 8004).